The sequence spans 432 residues: tRNA(Ile)-lysidine synthase (432 aa).

20–25 (SGGLDS) lines the ATP pocket.

This sequence belongs to the tRNA(Ile)-lysidine synthase family.

Its subcellular location is the cytoplasm. It carries out the reaction cytidine(34) in tRNA(Ile2) + L-lysine + ATP = lysidine(34) in tRNA(Ile2) + AMP + diphosphate + H(+). Ligates lysine onto the cytidine present at position 34 of the AUA codon-specific tRNA(Ile) that contains the anticodon CAU, in an ATP-dependent manner. Cytidine is converted to lysidine, thus changing the amino acid specificity of the tRNA from methionine to isoleucine. This is tRNA(Ile)-lysidine synthase from Shigella flexneri.